Consider the following 171-residue polypeptide: Lipoprotein signal peptidase (171 aa).

The next 3 membrane-spanning stretches (helical) occupy residues 8–28, 64–84, and 96–118; these read SFLWLSAVAFVVDLLTKYIVV, WQQYFFILLALAISGMLVYFL, and SAYALIIGGALANMVDRTYNGFV. Catalysis depends on residues D120 and D138. The chain crosses the membrane as a helical span at residues 133 to 153; it reads VFNIADIAICIGAGLLALDAF.

The protein belongs to the peptidase A8 family.

The protein localises to the cell inner membrane. It catalyses the reaction Release of signal peptides from bacterial membrane prolipoproteins. Hydrolyzes -Xaa-Yaa-Zaa-|-(S,diacylglyceryl)Cys-, in which Xaa is hydrophobic (preferably Leu), and Yaa (Ala or Ser) and Zaa (Gly or Ala) have small, neutral side chains.. The protein operates within protein modification; lipoprotein biosynthesis (signal peptide cleavage). In terms of biological role, this protein specifically catalyzes the removal of signal peptides from prolipoproteins. The chain is Lipoprotein signal peptidase from Haemophilus influenzae (strain 86-028NP).